Consider the following 341-residue polypeptide: Phosphoribosylaminoimidazole-succinocarboxamide synthase, chloroplastic (341 aa).

It belongs to the SAICAR synthetase family.

The protein resides in the plastid. Its subcellular location is the chloroplast. It catalyses the reaction 5-amino-1-(5-phospho-D-ribosyl)imidazole-4-carboxylate + L-aspartate + ATP = (2S)-2-[5-amino-1-(5-phospho-beta-D-ribosyl)imidazole-4-carboxamido]succinate + ADP + phosphate + 2 H(+). Its pathway is purine metabolism; IMP biosynthesis via de novo pathway; 5-amino-1-(5-phospho-D-ribosyl)imidazole-4-carboxamide from 5-amino-1-(5-phospho-D-ribosyl)imidazole-4-carboxylate: step 1/2. This chain is Phosphoribosylaminoimidazole-succinocarboxamide synthase, chloroplastic (PUR7), found in Vigna aconitifolia (Moth bean).